Here is a 591-residue protein sequence, read N- to C-terminus: MDDLDALLADLESTTSHISKRPVFLSEETPYSYPTGNHTYQEIAVPPPVPPPPSSEALNGTILDPLDQWQPSSSRFIHQQPQSSSPVYGSSAKTSSVSNPQDSVGSPCSRVGEEEHVYSFPNKQKSAEPSPTVMSTSLGSNLSELDRLLLELNAVQHNPPGFPADEANSSPPLPGALSPLYGVPETNSPLGGKAGPLTKEKPKRNGGRGLEDVRPSVESLLDELESSVPSPVPAITVNQGEMSSPQRVTSTQQQTRISASSATRELDELMASLSDFKIQGLEQRADGERCWAAGWPRDGGRSSPGGQDEGGFMAQGKTGSSSPPGGPPKPGSQLDSMLGSLQSDLNKLGVATVAKGVCGACKKPIAGQVVTAMGKTWHPEHFVCTHCQEEIGSRNFFERDGQPYCEKDYHNLFSPRCYYCNGPILDKVVTALDRTWHPEHFFCAQCGAFFGPEGFHEKDGKAYCRKDYFDMFAPKCGGCARAILENYISALNTLWHPECFVCRECFTPFVNGSFFEHDGQPYCEVHYHERRGSLCSGCQKPITGRCITAMAKKFHPEHFVCAFCLKQLNKGTFKEQNDKPYCQNCFLKLFC.

Methionine 1 is modified (N-acetylmethionine). Aspartate 2 bears the N-acetylserine mark. An LD motif 1 motif is present at residues 3–15 (DLDALLADLESTT). A disordered region spans residues 17-138 (HISKRPVFLS…PSPTVMSTSL (122 aa)). Phosphotyrosine; by PTK6 is present on tyrosine 31. A compositionally biased stretch (pro residues) spans 45-54 (VPPPVPPPPS). Over residues 69-106 (WQPSSSRFIHQQPQSSSPVYGSSAKTSSVSNPQDSVGS) the composition is skewed to polar residues. Residues serine 83 and serine 85 each carry the phosphoserine modification. Position 88 is a phosphotyrosine (tyrosine 88). Serine 106 carries the post-translational modification Phosphoserine. Tyrosine 118 bears the Phosphotyrosine; by PTK6 mark. 3 positions are modified to phosphoserine: serine 119, serine 126, and serine 130. The span at 121–137 (PNKQKSAEPSPTVMSTS) shows a compositional bias: polar residues. Threonine 132 carries the phosphothreonine modification. Serine 137, serine 140, and serine 143 each carry phosphoserine. The LD motif 2 motif lies at 144 to 156 (ELDRLLLELNAVQ). A disordered region spans residues 159–260 (PPGFPADEAN…TQQQTRISAS (102 aa)). At tyrosine 181 the chain carries Phosphotyrosine. The short motif at 216–228 (SVESLLDELESSV) is the LD motif 3 element. Serine 230 is modified (phosphoserine). The segment covering 236-260 (TVNQGEMSSPQRVTSTQQQTRISAS) has biased composition (polar residues). Residue serine 244 is modified to Phosphoserine; by CDK5. Residue serine 250 is modified to Phosphoserine; by SLK. Residues serine 258, serine 261, serine 272, serine 303, serine 322, serine 332, and serine 340 each carry the phosphoserine modification. The interval 262–315 (ATRELDELMASLSDFKIQGLEQRADGERCWAAGWPRDGGRSSPGGQDEGGFMAQ) is required for binding to PARVA and ILK. An LD motif 4 motif is present at residues 265–276 (ELDELMASLSDF). Residues 291–335 (WAAGWPRDGGRSSPGGQDEGGFMAQGKTGSSSPPGGPPKPGSQLD) are disordered. An LD motif 5 motif is present at residues 333–345 (QLDSMLGSLQSDL). 4 consecutive LIM zinc-binding domains span residues 356–415 (GVCG…LFSP), 416–473 (RCYY…DMFA), 474–533 (PKCG…RRGS), and 534–591 (LCSG…KLFC). Position 533 is a phosphoserine (serine 533).

This sequence belongs to the paxillin family. As to quaternary structure, interacts in vitro with VCL/vinculin as well as to the SH3 domain of SRC and, when tyrosine phosphorylated, to the SH2 domain of CRK. Interacts with GIT1. Interacts with NUDT16L1/SDOS. Interacts with PTK2/FAK1. Interacts with PTK2B/PYK2. Interacts with ASAP2. Interacts with unphosphorylated ITGA4. Interacts with RNF5. Interacts with PDCD10. Interacts with NEK3, the interaction is prolactin-dependent. Interacts with PTK6. Interacts with TGFB1I1. Interacts with SORBS1. Interacts with PARVB. Interacts (via LD motif 4) with PARVA/PARVIN. Interacts (via LD motif 4) with ILK. Interacts (via cytoplasmic domain) with CEACAM1; the interaction is phosphotyrosyl-dependent. Interacts with LIMA1; this complex stabilizes actin dynamics. Interacts with CD36 (via C-terminus). Interacts with TRIM15. Interacts with PAK4; PAK4 acts as a scaffold to suppport PAXI phosphorylation at Ser-272. In terms of assembly, interacts strongly with PTK2/FAK1 and weakly with VCL/vinculin. Interacts strongly with VCL/vinculin but only weakly with PTK2/FAK1. Post-translationally, phosphorylated by MAPK1/ERK2. Phosphorylated on tyrosine residues during integrin-mediated cell adhesion, embryonic development, fibroblast transformation and following stimulation of cells by mitogens. Phosphorylation at Ser-244 by CDK5 reduces its interaction with PTK2/FAK1 in matrix-cell focal adhesions (MCFA) during oligodendrocytes (OLs) differentiation. Phosphorylation at Tyr-31 and Tyr-118 by PTK6 promote the activation of RAC1 via CRK/CrKII, thereby promoting migration and invasion. Phosphorylation at Ser-250 by SLK is required for PXN redistribution and cell motility. Phosphorylation at Ser-272 promotes focal adhesion disassembly during cell migration.

The protein localises to the cytoplasm. Its subcellular location is the cytoskeleton. It localises to the cell junction. The protein resides in the focal adhesion. It is found in the cell cortex. In terms of biological role, cytoskeletal protein involved in actin-membrane attachment at sites of cell adhesion to the extracellular matrix (focal adhesion). Recruits other proteins such as TRIM15 to focal adhesion. The polypeptide is Paxillin (Homo sapiens (Human)).